The chain runs to 102 residues: NADH-quinone oxidoreductase subunit K (102 aa).

Helical transmembrane passes span 5 to 25 (LGHY…GIFL), 30 to 50 (IIVI…NLVA), and 62 to 82 (VFAL…LAVL).

The protein belongs to the complex I subunit 4L family. In terms of assembly, NDH-1 is composed of 14 different subunits. Subunits NuoA, H, J, K, L, M, N constitute the membrane sector of the complex.

It localises to the cell inner membrane. The enzyme catalyses a quinone + NADH + 5 H(+)(in) = a quinol + NAD(+) + 4 H(+)(out). Functionally, NDH-1 shuttles electrons from NADH, via FMN and iron-sulfur (Fe-S) centers, to quinones in the respiratory chain. The immediate electron acceptor for the enzyme in this species is believed to be ubiquinone. Couples the redox reaction to proton translocation (for every two electrons transferred, four hydrogen ions are translocated across the cytoplasmic membrane), and thus conserves the redox energy in a proton gradient. The polypeptide is NADH-quinone oxidoreductase subunit K (Bradyrhizobium sp. (strain BTAi1 / ATCC BAA-1182)).